A 171-amino-acid chain; its full sequence is Crossover junction endodeoxyribonuclease RuvC (171 aa).

Residues Asp11, Glu71, and Asp143 contribute to the active site. The Mg(2+) site is built by Asp11, Glu71, and Asp143.

It belongs to the RuvC family. Homodimer which binds Holliday junction (HJ) DNA. The HJ becomes 2-fold symmetrical on binding to RuvC with unstacked arms; it has a different conformation from HJ DNA in complex with RuvA. In the full resolvosome a probable DNA-RuvA(4)-RuvB(12)-RuvC(2) complex forms which resolves the HJ. Mg(2+) serves as cofactor.

It localises to the cytoplasm. It carries out the reaction Endonucleolytic cleavage at a junction such as a reciprocal single-stranded crossover between two homologous DNA duplexes (Holliday junction).. In terms of biological role, the RuvA-RuvB-RuvC complex processes Holliday junction (HJ) DNA during genetic recombination and DNA repair. Endonuclease that resolves HJ intermediates. Cleaves cruciform DNA by making single-stranded nicks across the HJ at symmetrical positions within the homologous arms, yielding a 5'-phosphate and a 3'-hydroxyl group; requires a central core of homology in the junction. The consensus cleavage sequence is 5'-(A/T)TT(C/G)-3'. Cleavage occurs on the 3'-side of the TT dinucleotide at the point of strand exchange. HJ branch migration catalyzed by RuvA-RuvB allows RuvC to scan DNA until it finds its consensus sequence, where it cleaves and resolves the cruciform DNA. This chain is Crossover junction endodeoxyribonuclease RuvC, found in Chelativorans sp. (strain BNC1).